A 190-amino-acid chain; its full sequence is Probable RNA-binding protein 18 (190 aa).

In terms of domain architecture, RRM spans 25–106 (HRLWIGNLDP…KKLVVRWAHA (82 aa)). Residues 166–190 (VYSYFKPPDKKRTTPYSRTAWKSRR) are disordered.

This is Probable RNA-binding protein 18 (RBM18) from Bos taurus (Bovine).